The primary structure comprises 423 residues: AP-1 complex subunit mu-2 (423 aa).

An MHD domain is found at 168 to 421 (KNEVFIDVIE…ITQSGDYQLR (254 aa)).

Belongs to the adaptor complexes medium subunit family. As to quaternary structure, adaptor protein complex 1 (AP-1) is a heterotetramer composed of two large adaptins (gamma-type subunit AP1G1 and beta-type subunit AP1B1), a medium adaptin (mu-type subunit AP1M1 or AP1M2) and a small adaptin (sigma-type subunit AP1S1 or AP1S2 or AP1S3). Interacts with P2X4. Post-translationally, phosphorylation of membrane-bound AP1M1/AP1M2 increases its affinity for sorting signals.

It localises to the cytoplasmic vesicle. It is found in the clathrin-coated vesicle membrane. The protein localises to the golgi apparatus. Subunit of clathrin-associated adaptor protein complex 1 that plays a role in protein sorting in the trans-Golgi network (TGN) and endosomes. The AP complexes mediate the recruitment of clathrin to membranes and the recognition of sorting signals within the cytosolic tails of transmembrane cargo molecules. The protein is AP-1 complex subunit mu-2 of Bos taurus (Bovine).